The following is a 272-amino-acid chain: Dermonecrotic toxin LvSicTox-alphaIC1biii (272 aa).

The active site involves His-5. Mg(2+)-binding residues include Glu-25 and Asp-27. The active-site Nucleophile is the His-41. Cystine bridges form between Cys-45/Cys-51 and Cys-47/Cys-189. Position 84 (Asp-84) interacts with Mg(2+).

Belongs to the arthropod phospholipase D family. Class II subfamily. The cofactor is Mg(2+). Expressed by the venom gland.

Its subcellular location is the secreted. The catalysed reaction is an N-(acyl)-sphingosylphosphocholine = an N-(acyl)-sphingosyl-1,3-cyclic phosphate + choline. The enzyme catalyses an N-(acyl)-sphingosylphosphoethanolamine = an N-(acyl)-sphingosyl-1,3-cyclic phosphate + ethanolamine. It carries out the reaction a 1-acyl-sn-glycero-3-phosphocholine = a 1-acyl-sn-glycero-2,3-cyclic phosphate + choline. It catalyses the reaction a 1-acyl-sn-glycero-3-phosphoethanolamine = a 1-acyl-sn-glycero-2,3-cyclic phosphate + ethanolamine. Its function is as follows. Dermonecrotic toxins cleave the phosphodiester linkage between the phosphate and headgroup of certain phospholipids (sphingolipid and lysolipid substrates), forming an alcohol (often choline) and a cyclic phosphate. This toxin acts on sphingomyelin (SM). It may also act on ceramide phosphoethanolamine (CPE), lysophosphatidylcholine (LPC) and lysophosphatidylethanolamine (LPE), but not on lysophosphatidylserine (LPS), and lysophosphatidylglycerol (LPG). It acts by transphosphatidylation, releasing exclusively cyclic phosphate products as second products. Induces dermonecrosis, hemolysis, increased vascular permeability, edema, inflammatory response, and platelet aggregation. This Loxosceles variegata (Recluse spider) protein is Dermonecrotic toxin LvSicTox-alphaIC1biii.